The following is a 285-amino-acid chain: Tetraspanin-3 (285 aa).

At 1 to 6 (MRTSNH) the chain is on the cytoplasmic side. The chain crosses the membrane as a helical span at residues 7–27 (LIGLVNFLTFLLSIPILGGGI). The Extracellular portion of the chain corresponds to 28–43 (WLSSRANSTDCLRFLQ). An N-linked (GlcNAc...) asparagine glycan is attached at N34. Residues 44–64 (WPLIVIGISIMVVSLAGFAGA) form a helical membrane-spanning segment. Topologically, residues 65-71 (CYRNKFL) are cytoplasmic. Residues 72-92 (MWLYLVVMLLIIAALIGFIIF) traverse the membrane as a helical segment. Residues 93–235 (AYAVTDKGSG…LGSLKKSWRK (143 aa)) lie on the Extracellular side of the membrane. An N-linked (GlcNAc...) asparagine glycan is attached at N187. The chain crosses the membrane as a helical span at residues 236-256 (VSVINIVVLIILVIFYVIAYA). Over 257–285 (AYRNVKRIDNDEPAGEARMTKSHPSHFHL) the chain is Cytoplasmic.

The protein belongs to the tetraspanin (TM4SF) family.

Its subcellular location is the cell membrane. May be involved in the regulation of cell differentiation. The chain is Tetraspanin-3 (TET3) from Arabidopsis thaliana (Mouse-ear cress).